The chain runs to 185 residues: Ribosome-recycling factor (185 aa).

This sequence belongs to the RRF family.

Its subcellular location is the cytoplasm. Responsible for the release of ribosomes from messenger RNA at the termination of protein biosynthesis. May increase the efficiency of translation by recycling ribosomes from one round of translation to another. The polypeptide is Ribosome-recycling factor (Shewanella sp. (strain ANA-3)).